Reading from the N-terminus, the 622-residue chain is Histone-arginine methyltransferase CARMER (622 aa).

The region spanning Ala118 to Asp425 is the SAM-dependent MTase PRMT-type domain. Positions 131, 140, 164, 186, 215, and 243 each coordinate S-adenosyl-L-methionine. Asymmetric dimethylarginine; by autocatalysis is present on Arg478. Disordered regions lie at residues Ala513–Gln556 and Gln602–Tyr622. Over residues Gln536–Gln556 the composition is skewed to low complexity.

It belongs to the class I-like SAM-binding methyltransferase superfamily. Protein arginine N-methyltransferase family. In terms of assembly, homodimer. Post-translationally, the dimethylated protein is the major form.

The protein resides in the cytoplasm. It localises to the nucleus. It catalyses the reaction L-arginyl-[protein] + 2 S-adenosyl-L-methionine = N(omega),N(omega)-dimethyl-L-arginyl-[protein] + 2 S-adenosyl-L-homocysteine + 2 H(+). Methylates (mono- and asymmetric dimethylation) the guanidino nitrogens of arginyl residues in proteins. May methylate histone H3 at 'Arg-17' and activate transcription via chromatin remodeling. This is Histone-arginine methyltransferase CARMER from Anopheles gambiae (African malaria mosquito).